The primary structure comprises 243 residues: uncharacterized protein (243 aa).

This is an uncharacterized protein from Methanocaldococcus jannaschii (strain ATCC 43067 / DSM 2661 / JAL-1 / JCM 10045 / NBRC 100440) (Methanococcus jannaschii).